The primary structure comprises 344 residues: D-beta-hydroxybutyrate dehydrogenase, mitochondrial (344 aa).

A mitochondrion-targeting transit peptide spans 1-46 (MLTARLSRPLSQLPRKTLNFSDRENGTRGSLLLYSAPFVPVGRRTY). Residue 59–83 (LITGCDSGFGFSLAKHLHSEGFLVF) coordinates NAD(+). N6-acetyllysine occurs at positions 73 and 97. Lys103 bears the N6-acetyllysine; alternate mark. Lys103 carries the N6-succinyllysine; alternate modification. Residue Lys177 is modified to N6-acetyllysine. Residue Ser195 participates in substrate binding. Tyr208 serves as the catalytic Proton acceptor. Lys212 is modified (N6-acetyllysine). Ser219 is a glycosylation site (O-linked (GlcNAc) serine). Ser246 carries the post-translational modification Phosphoserine. The residue at position 260 (Lys260) is an N6-acetyllysine; alternate. Position 260 is an N6-succinyllysine; alternate (Lys260). Position 281 is an N6-acetyllysine (Lys281).

It belongs to the short-chain dehydrogenases/reductases (SDR) family. As to quaternary structure, homotetramer.

It is found in the mitochondrion inner membrane. The protein resides in the mitochondrion matrix. The enzyme catalyses (R)-3-hydroxybutanoate + NAD(+) = acetoacetate + NADH + H(+). Requires phosphatidylcholine as an allosteric activator for enzymatic activity. In Bos taurus (Bovine), this protein is D-beta-hydroxybutyrate dehydrogenase, mitochondrial.